The primary structure comprises 662 residues: Glutathione hydrolase 7 (662 aa).

Residues 1–106 are Cytoplasmic-facing; sequence MAAENEASQE…AAECSCRQDG (106 aa). Residues Ser17, Ser72, Ser79, and Ser83 each carry the phosphoserine modification. Positions 26-90 are disordered; it reads SFPRLPEDEP…DGSPLRETRK (65 aa). The segment covering 72–83 has biased composition (low complexity); sequence SSSSEMGSQDGS. A helical; Signal-anchor for type II membrane protein transmembrane segment spans residues 107-127; it reads LTVIVTACLTFATGVTVALVM. Residues 128 to 662 are Extracellular-facing; the sequence is QIYFGDPQIF…SPDAAGATIL (535 aa). Residues Asn198, Asn267, Asn283, Asn330, Asn353, Asn394, Asn519, Asn523, and Asn586 are each glycosylated (N-linked (GlcNAc...) asparagine).

Belongs to the gamma-glutamyltransferase family. Heterodimer composed of the light and heavy chains. The active site is located in the light chain. In terms of processing, cleaved by autocatalysis into a large and a small subunit and the autocatalytic cleavage is essential to the functional activation of the enzyme.

Its subcellular location is the membrane. It catalyses the reaction an N-terminal (5-L-glutamyl)-[peptide] + an alpha-amino acid = 5-L-glutamyl amino acid + an N-terminal L-alpha-aminoacyl-[peptide]. The catalysed reaction is glutathione + H2O = L-cysteinylglycine + L-glutamate. It carries out the reaction an S-substituted glutathione + H2O = an S-substituted L-cysteinylglycine + L-glutamate. The protein operates within sulfur metabolism; glutathione metabolism. Functionally, hydrolyzes and transfers gamma-glutamyl moieties from glutathione and other gamma-glutamyl compounds to acceptors. The protein is Glutathione hydrolase 7 of Mus musculus (Mouse).